The chain runs to 476 residues: RuvB-like 1 (476 aa).

Residues 1–23 (MDMEVDEAISGTSSSRLAPIEEV) are disordered. 89 to 96 (GPPATGKT) serves as a coordination point for ATP.

It belongs to the RuvB family. In terms of assembly, forms homohexameric rings. May form a dodecamer with ruvb-2 made of two stacked hexameric rings. As to expression, expressed in gonadal cells.

The protein localises to the cytoplasm. It is found in the nucleus. It catalyses the reaction ATP + H2O = ADP + phosphate + H(+). Possesses single-stranded DNA-stimulated ATPase and ATP dependent DNA helicase (3' to 5') activity suggesting a role in nuclear processes such as recombination and transcription. May participate in several chromatin remodeling complexes that mediate the ATP-dependent exchange of histones and remodel chromatin by shifting nucleosomes. Involvement in these complexes is likely required for transcriptional activation of selected genes and DNA repair in response to DNA damage. Involved in the Ce-Tor signaling pathway whereby it is required for the accumulation and localization of box C/D snoRNP to nucleoli to regulate ribosomal maturation and thus protein synthesis. Antagonizes the transcriptional activity of transcription factor pha-4, to control postembryonic development and adult longevity. Has a role in pharyngeal development. Has a role in gonadal development. This chain is RuvB-like 1, found in Caenorhabditis elegans.